Consider the following 778-residue polypeptide: Preasperterpenoid A synthase PvPS (778 aa).

Residues 1 to 414 (MAATKKSTAT…HRYNFHKPAA (414 aa)) are terpene cyclase. Mg(2+) contacts are provided by Asp176 and Asp180. Asp176 lines the substrate pocket. The DDXXD 1 motif lies at 176–180 (DDILD). Substrate contacts are provided by residues 266-269 (RVIN), Asn310, 314-318 (SWEKE), and 406-407 (RY). Residues 310-318 (NDYFSWEKE) carry the NSE/DTE motif. A compositionally biased stretch (basic and acidic residues) spans 414–431 (AKENEDTDDEGAKSDDSK). The tract at residues 415 to 778 (KENEDTDDEG…LRLLLKRLQV (364 aa)) is prenyltransferase. The segment at 416-454 (ENEDTDDEGAKSDDSKTTLNDSTDSTVVDVKTPATSGLL) is disordered. Residues Lys499, Arg502, and His531 each contribute to the isopentenyl diphosphate site. Residues Asp538 and Asp542 each coordinate Mg(2+). The DDXXD 2 motif lies at 538–542 (DDIED). Arg547 is a binding site for dimethylallyl diphosphate. Arg548 lines the isopentenyl diphosphate pocket. Residues Lys625, Thr626, Gln662, Asn669, Lys679, and Lys689 each contribute to the dimethylallyl diphosphate site.

This sequence in the N-terminal section; belongs to the terpene synthase family. The protein in the C-terminal section; belongs to the FPP/GGPP synthase family. Hexamer. Mg(2+) serves as cofactor.

It catalyses the reaction isopentenyl diphosphate + (2E,6E)-farnesyl diphosphate = (2E,6E,10E)-geranylgeranyl diphosphate + diphosphate. The catalysed reaction is isopentenyl diphosphate + (2E,6E,10E)-geranylgeranyl diphosphate = (2E,6E,10E,14E)-geranylfarnesyl diphosphate + diphosphate. It carries out the reaction (2E,6E,10E,14E)-geranylfarnesyl diphosphate = preasperterpenoid A + diphosphate. It functions in the pathway secondary metabolite biosynthesis; terpenoid biosynthesis. Its function is as follows. Bifunctional sesterterpene synthase that possesses both prenyl transferase and terpene cyclase activity, converting isopentenyl diphosphate and dimethylallyl diphosphate into geranylfarnesyl diphosphate (GFPP) and further converting GFPP into preasperterpenoid A. This Talaromyces verruculosus (Penicillium verruculosum) protein is Preasperterpenoid A synthase PvPS.